We begin with the raw amino-acid sequence, 263 residues long: Stress-response A/B barrel domain-containing protein UP3 (263 aa).

Stress-response A/B barrel domains lie at 49 to 142 (IEHI…AVDW) and 158 to 252 (VAKL…VVEF). The short motif at 261 to 263 (SSL) is the Peroxisomal targeting signal element.

In terms of assembly, homodimer.

It localises to the peroxisome. Its function is as follows. Involved in stress response. The chain is Stress-response A/B barrel domain-containing protein UP3 from Arabidopsis thaliana (Mouse-ear cress).